We begin with the raw amino-acid sequence, 294 residues long: Pyrroline-5-carboxylate reductase (294 aa).

The protein belongs to the pyrroline-5-carboxylate reductase family.

It is found in the cytoplasm. The catalysed reaction is L-proline + NADP(+) = (S)-1-pyrroline-5-carboxylate + NADPH + 2 H(+). It carries out the reaction L-proline + NAD(+) = (S)-1-pyrroline-5-carboxylate + NADH + 2 H(+). Its pathway is amino-acid biosynthesis; L-proline biosynthesis; L-proline from L-glutamate 5-semialdehyde: step 1/1. Functionally, catalyzes the reduction of 1-pyrroline-5-carboxylate (PCA) to L-proline. In Mycobacterium leprae (strain TN), this protein is Pyrroline-5-carboxylate reductase.